Here is a 457-residue protein sequence, read N- to C-terminus: Succinate-semialdehyde dehydrogenase [NADP(+)] (457 aa).

Residues 133–134 (WN), 157–160 (KHAS), and 209–210 (GS) contribute to the NADP(+) site. Glutamate 231 serves as the catalytic Proton acceptor. Residue leucine 232 coordinates NADP(+). Cysteine 265 acts as the Nucleophile in catalysis. Residue glutamate 362 coordinates NADP(+).

The protein belongs to the aldehyde dehydrogenase family.

It carries out the reaction succinate semialdehyde + NADP(+) + H2O = succinate + NADPH + 2 H(+). Functionally, catalyzes the NADP(+)-dependent oxidation of succinate semialdehyde to succinate. It is believed to be the main source of succinate semialdehyde dehydrogenase activity in Mycobacterium. In Mycobacterium leprae (strain TN), this protein is Succinate-semialdehyde dehydrogenase [NADP(+)] (gabD1).